The following is a 369-amino-acid chain: Anhydro-N-acetylmuramic acid kinase (369 aa).

12-19 (GTSMDGVD) is an ATP binding site.

Belongs to the anhydro-N-acetylmuramic acid kinase family.

The catalysed reaction is 1,6-anhydro-N-acetyl-beta-muramate + ATP + H2O = N-acetyl-D-muramate 6-phosphate + ADP + H(+). It functions in the pathway amino-sugar metabolism; 1,6-anhydro-N-acetylmuramate degradation. It participates in cell wall biogenesis; peptidoglycan recycling. Functionally, catalyzes the specific phosphorylation of 1,6-anhydro-N-acetylmuramic acid (anhMurNAc) with the simultaneous cleavage of the 1,6-anhydro ring, generating MurNAc-6-P. Is required for the utilization of anhMurNAc either imported from the medium or derived from its own cell wall murein, and thus plays a role in cell wall recycling. The chain is Anhydro-N-acetylmuramic acid kinase from Shewanella amazonensis (strain ATCC BAA-1098 / SB2B).